The primary structure comprises 295 residues: Cytidine deaminase (295 aa).

2 consecutive CMP/dCMP-type deaminase domains span residues Thr-48 to Ser-168 and Glu-187 to Leu-295. Asn-89–Glu-91 contributes to the substrate binding site. A Zn(2+)-binding site is contributed by His-102. The active-site Proton donor is Glu-104. The Zn(2+) site is built by Cys-129 and Cys-132.

Belongs to the cytidine and deoxycytidylate deaminase family. Homodimer. The cofactor is Zn(2+).

It carries out the reaction cytidine + H2O + H(+) = uridine + NH4(+). The catalysed reaction is 2'-deoxycytidine + H2O + H(+) = 2'-deoxyuridine + NH4(+). In terms of biological role, this enzyme scavenges exogenous and endogenous cytidine and 2'-deoxycytidine for UMP synthesis. The chain is Cytidine deaminase from Vibrio vulnificus (strain YJ016).